The primary structure comprises 145 residues: Cell wall teichoic acid glycosylation protein GtcA (145 aa).

4 helical membrane passes run 21-41, 45-65, 91-111, and 122-142; these read IFMY…TFWL, ILNW…VLFA, FFGF…LLIS, and IWTN…IIFK.

It belongs to the GtrA family.

It is found in the cell membrane. Its function is as follows. Involved in the decoration of cell wall teichoic acid with galactose and glucose. The protein is Cell wall teichoic acid glycosylation protein GtcA (gtcA) of Listeria monocytogenes.